The following is a 337-amino-acid chain: S-adenosylmethionine:tRNA ribosyltransferase-isomerase (337 aa).

It belongs to the QueA family. Monomer.

The protein resides in the cytoplasm. It carries out the reaction 7-aminomethyl-7-carbaguanosine(34) in tRNA + S-adenosyl-L-methionine = epoxyqueuosine(34) in tRNA + adenine + L-methionine + 2 H(+). The protein operates within tRNA modification; tRNA-queuosine biosynthesis. Functionally, transfers and isomerizes the ribose moiety from AdoMet to the 7-aminomethyl group of 7-deazaguanine (preQ1-tRNA) to give epoxyqueuosine (oQ-tRNA). In Legionella pneumophila (strain Corby), this protein is S-adenosylmethionine:tRNA ribosyltransferase-isomerase.